The chain runs to 391 residues: Zinc finger protein DPF3 (391 aa).

Residues glutamate 152–valine 165 are compositionally biased toward acidic residues. 2 disordered regions span residues glutamate 152–cysteine 200 and leucine 236–proline 266. The span at lysine 169 to arginine 183 shows a compositional bias: basic residues. The C2H2-type zinc-finger motif lies at tyrosine 198–histidine 235. 2 consecutive PHD-type zinc fingers follow at residues asparagine 273–cysteine 333 and cysteine 330–leucine 380.

In terms of assembly, component of the BAF complex. Interacts with acetylated histones H3 and H4. Component of neuron-specific chromatin remodeling complex (nBAF complex), a subfamily of ATP-dependent SWI/SNF chromatin remodeling complexes. In terms of tissue distribution, expressed in the heart and somites.

It localises to the nucleus. Muscle-specific component of the BAF complex, a multiprotein complex involved in transcriptional activation and repression of select genes by chromatin remodeling (alteration of DNA-nucleosome topology). Specifically binds acetylated lysines on histone 3 and 4. In the complex, it acts as a tissue-specific anchor between histone acetylations and methylations and chromatin remodeling. Belongs to the neuron-specific chromatin remodeling complex (nBAF complex) and may play a role in neural development. Plays an essential role in heart and skeletal muscle development. In Danio rerio (Zebrafish), this protein is Zinc finger protein DPF3 (dpf3).